The following is a 66-amino-acid chain: MPT51 antigen (66 aa).

An N-terminal signal peptide occupies residues 1 to 38 (MTVVRGVSALLRVFCIAMLAAGLGVALQPAAVTGAARA).

This sequence belongs to the mycobacterial A85 antigen family. As to quaternary structure, homodimer.

The protein resides in the secreted. In terms of biological role, may have a role in host tissue attachment, whereby ligands may include the serum protein fibronectin and small sugars. The chain is MPT51 antigen (mpt51) from Mycobacterium avium.